Consider the following 162-residue polypeptide: Large ribosomal subunit protein uL10 (162 aa).

This sequence belongs to the universal ribosomal protein uL10 family. In terms of assembly, part of the ribosomal stalk of the 50S ribosomal subunit. The N-terminus interacts with L11 and the large rRNA to form the base of the stalk. The C-terminus forms an elongated spine to which L12 dimers bind in a sequential fashion forming a multimeric L10(L12)X complex.

In terms of biological role, forms part of the ribosomal stalk, playing a central role in the interaction of the ribosome with GTP-bound translation factors. This is Large ribosomal subunit protein uL10 from Borrelia recurrentis (strain A1).